We begin with the raw amino-acid sequence, 271 residues long: S-adenosylmethionine decarboxylase proenzyme (271 aa).

Ser121 (schiff-base intermediate with substrate; via pyruvic acid) is an active-site residue. At Ser121 the chain carries Pyruvic acid (Ser); by autocatalysis. Catalysis depends on His126, which acts as the Proton acceptor; for processing activity. Cys149 (proton donor; for catalytic activity) is an active-site residue.

The protein belongs to the prokaryotic AdoMetDC family. Type 2 subfamily. As to quaternary structure, heterooctamer of four alpha and four beta chains arranged as a tetramer of alpha/beta heterodimers. Pyruvate is required as a cofactor. Is synthesized initially as an inactive proenzyme. Formation of the active enzyme involves a self-maturation process in which the active site pyruvoyl group is generated from an internal serine residue via an autocatalytic post-translational modification. Two non-identical subunits are generated from the proenzyme in this reaction, and the pyruvate is formed at the N-terminus of the alpha chain, which is derived from the carboxyl end of the proenzyme. The post-translation cleavage follows an unusual pathway, termed non-hydrolytic serinolysis, in which the side chain hydroxyl group of the serine supplies its oxygen atom to form the C-terminus of the beta chain, while the remainder of the serine residue undergoes an oxidative deamination to produce ammonia and the pyruvoyl group blocking the N-terminus of the alpha chain.

It catalyses the reaction S-adenosyl-L-methionine + H(+) = S-adenosyl 3-(methylsulfanyl)propylamine + CO2. The protein operates within amine and polyamine biosynthesis; S-adenosylmethioninamine biosynthesis; S-adenosylmethioninamine from S-adenosyl-L-methionine: step 1/1. In terms of biological role, catalyzes the decarboxylation of S-adenosylmethionine to S-adenosylmethioninamine (dcAdoMet), the propylamine donor required for the synthesis of the polyamines spermine and spermidine from the diamine putrescine. This is S-adenosylmethionine decarboxylase proenzyme from Clostridium perfringens (strain SM101 / Type A).